Reading from the N-terminus, the 209-residue chain is MAEKMGILGRKIGVTRIFASDGSAVAVTVIKAGPCPVTQVKTVATDGYDAIQIAFDEAKEKHLNKPEIGHLAKAGKGLFRTLREIRLEAPAAYEVGSELDVTLFATGDRVKVSGTSIGKGYQGVMRRWNFAGSKDTHGCEKVHRSGGSIGNNTFPGHVFKGKKMAGHWGNESVTVLNLEVVDVRPEDNVILVKGSVPGPKNGLVMVRKQ.

The protein belongs to the universal ribosomal protein uL3 family. In terms of assembly, part of the 50S ribosomal subunit. Forms a cluster with proteins L14 and L19.

In terms of biological role, one of the primary rRNA binding proteins, it binds directly near the 3'-end of the 23S rRNA, where it nucleates assembly of the 50S subunit. The sequence is that of Large ribosomal subunit protein uL3 from Nitratidesulfovibrio vulgaris (strain ATCC 29579 / DSM 644 / CCUG 34227 / NCIMB 8303 / VKM B-1760 / Hildenborough) (Desulfovibrio vulgaris).